The following is a 360-amino-acid chain: Decorin (360 aa).

The signal sequence occupies residues 1 to 16 (MKATIIFFLVAQVSWA). A propeptide spanning residues 17-30 (GPFQQKGLFDFMLE) is cleaved from the precursor. The O-linked (Xyl...) (glycosaminoglycan) serine glycan is linked to S34. Disulfide bonds link C55–C61 and C59–C68. 12 LRR repeats span residues 74–94 (EKVP…NNKI), 95–118 (TEIK…NNKI), 119–142 (SKIS…KNQL), 143–163 (KELP…ENEI), 164–187 (TKVR…TNPL), 188–213 (KSSG…DTNI), 214–234 (TTIP…GNKI), 235–258 (TKVD…FNSI), 259–282 (SAVD…NNKL), 283–305 (VKVP…NNNI), 306–335 (SAIG…SNPV), and 336–360 (QYWE…GNYK). A glycan (N-linked (GlcNAc...) asparagine) is linked at N212. N-linked (GlcNAc...) asparagine glycans are attached at residues N263 and N304. The cysteines at positions 314 and 347 are disulfide-linked.

This sequence belongs to the small leucine-rich proteoglycan (SLRP) family. SLRP class I subfamily. As to quaternary structure, binds to type I and type II collagen, fibronectin and TGF-beta. Forms a ternary complex with MFAP2 and ELN. Interacts with DPT. The attached glycosaminoglycan chain can be either chondroitin sulfate or dermatan sulfate depending upon the tissue of origin.

It is found in the secreted. The protein localises to the extracellular space. The protein resides in the extracellular matrix. Functionally, may affect the rate of fibrils formation. The chain is Decorin (DCN) from Ovis aries (Sheep).